The chain runs to 70 residues: UPF0337 protein BT9727_3385 (70 aa).

This sequence belongs to the UPF0337 (CsbD) family.

The protein is UPF0337 protein BT9727_3385 of Bacillus thuringiensis subsp. konkukian (strain 97-27).